Consider the following 360-residue polypeptide: MPKKILFTGGGTVGHVTLNLILIPKFIKDGWEVHYIGDKNGIEHTEIEKSGLDVTFHAIATGKLRRYFSWQNLADVFKVALGLLQSLFILAKLRPQALFSKGGFVSVPPVVAAKLLGKPVFIHESDRSMGLANKIAYKFATTMYTTFEQEDQLSKVKHLGAVTKVFKDANQMPESTQLEAVKEYFSRDLKTLLFIGGSAGAHVFNQFISDHPELKQRYNIINITGDPHLNELSSHLYRVDYVTDLYQPLIAMADLVVTRGGSNTLFELLAMAKLHLIVPLGKEASRGDQLENATYFEKRGYAKQLQEPDLTLHNFDQAMADLFEHQADYEATMLATKEIQSPDFFYDLLRADISSAIKEK.

UDP-N-acetyl-alpha-D-glucosamine-binding residues include Ser-198 and Gln-289.

The protein belongs to the glycosyltransferase 28 family. MurG subfamily.

The protein resides in the cell membrane. It catalyses the reaction Mur2Ac(oyl-L-Ala-gamma-D-Glu-L-Lys-D-Ala-D-Ala)-di-trans,octa-cis-undecaprenyl diphosphate + UDP-N-acetyl-alpha-D-glucosamine = beta-D-GlcNAc-(1-&gt;4)-Mur2Ac(oyl-L-Ala-gamma-D-Glu-L-Lys-D-Ala-D-Ala)-di-trans,octa-cis-undecaprenyl diphosphate + UDP + H(+). It functions in the pathway cell wall biogenesis; peptidoglycan biosynthesis. In terms of biological role, cell wall formation. Catalyzes the transfer of a GlcNAc subunit on undecaprenyl-pyrophosphoryl-MurNAc-pentapeptide (lipid intermediate I) to form undecaprenyl-pyrophosphoryl-MurNAc-(pentapeptide)GlcNAc (lipid intermediate II). The polypeptide is UDP-N-acetylglucosamine--N-acetylmuramyl-(pentapeptide) pyrophosphoryl-undecaprenol N-acetylglucosamine transferase (Streptococcus pyogenes serotype M49 (strain NZ131)).